The following is a 364-amino-acid chain: RNA polymerase II holoenzyme cyclin-like subunit (364 aa).

The region spanning 53–143 (QQINRLSKRI…VGECEFSLIS (91 aa)) is the Cyclin N-terminal domain. The disordered stretch occupies residues 268 to 303 (PGFGSQGSQQQAGFSQGNSQGSLQGDSAAAEPKKVT). The segment covering 273–289 (QGSQQQAGFSQGNSQGS) has biased composition (low complexity).

The protein belongs to the cyclin family. Cyclin C subfamily. Component of the SRB8-11 complex, a regulatory module of the Mediator complex.

Its subcellular location is the nucleus. Functionally, component of the SRB8-11 complex. The SRB8-11 complex is a regulatory module of the Mediator complex which is itself involved in regulation of basal and activated RNA polymerase II-dependent transcription. The SRB8-11 complex may be involved in the transcriptional repression of a subset of genes regulated by Mediator. It may inhibit the association of the Mediator complex with RNA polymerase II to form the holoenzyme complex. The SRB8-11 complex phosphorylates the C-terminal domain (CTD) of the largest subunit of RNA polymerase II. The chain is RNA polymerase II holoenzyme cyclin-like subunit (SSN8) from Chaetomium globosum (strain ATCC 6205 / CBS 148.51 / DSM 1962 / NBRC 6347 / NRRL 1970) (Soil fungus).